A 109-amino-acid polypeptide reads, in one-letter code: METRAILRGVRLSAQKGRLVADQVRGRPVDQALNILAFSPKKGAQIIRKVMESAIANAEHNDGADIDTLKVKTIYVEEGMSLKRFAARAKGRGARILKPTCHIYVTVGE.

It belongs to the universal ribosomal protein uL22 family. In terms of assembly, part of the 50S ribosomal subunit.

Functionally, this protein binds specifically to 23S rRNA; its binding is stimulated by other ribosomal proteins, e.g. L4, L17, and L20. It is important during the early stages of 50S assembly. It makes multiple contacts with different domains of the 23S rRNA in the assembled 50S subunit and ribosome. In terms of biological role, the globular domain of the protein is located near the polypeptide exit tunnel on the outside of the subunit, while an extended beta-hairpin is found that lines the wall of the exit tunnel in the center of the 70S ribosome. In Aromatoleum aromaticum (strain DSM 19018 / LMG 30748 / EbN1) (Azoarcus sp. (strain EbN1)), this protein is Large ribosomal subunit protein uL22.